The sequence spans 149 residues: Inner membrane protein YdcZ (149 aa).

Residues 1–4 (MNQS) are Periplasmic-facing. The helical transmembrane segment at 5–25 (LTLAFLIAAGIGLVVQNTLMV) threads the bilayer. Residues 26-33 (RITQTSST) are Cytoplasmic-facing. The chain crosses the membrane as a helical span at residues 34 to 54 (ILIAMLLNSLVGIVLFVSILW). Over 55-70 (FKQGMAGFGELVSSVR) the chain is Periplasmic. Residues 71–91 (WWTLIPGLLGSFFVFASISGY) traverse the membrane as a helical segment. At 92–93 (QN) the chain is on the cytoplasmic side. The chain crosses the membrane as a helical span at residues 94–114 (VGAATTIAVLVASQLIGGLML). The Periplasmic portion of the chain corresponds to 115–123 (DIFRSHGVP). A helical membrane pass occupies residues 124–144 (LRALFGPICGAILLVVGAWLV). Over 145 to 149 (ARRSF) the chain is Cytoplasmic.

It localises to the cell inner membrane. The protein is Inner membrane protein YdcZ (ydcZ) of Escherichia coli (strain K12).